The sequence spans 304 residues: Sulfate adenylyltransferase subunit 2 (304 aa).

It belongs to the PAPS reductase family. CysD subfamily. In terms of assembly, heterodimer composed of CysD, the smaller subunit, and CysN.

The catalysed reaction is sulfate + ATP + H(+) = adenosine 5'-phosphosulfate + diphosphate. It participates in sulfur metabolism; hydrogen sulfide biosynthesis; sulfite from sulfate: step 1/3. Functionally, with CysN forms the ATP sulfurylase (ATPS) that catalyzes the adenylation of sulfate producing adenosine 5'-phosphosulfate (APS) and diphosphate, the first enzymatic step in sulfur assimilation pathway. APS synthesis involves the formation of a high-energy phosphoric-sulfuric acid anhydride bond driven by GTP hydrolysis by CysN coupled to ATP hydrolysis by CysD. The sequence is that of Sulfate adenylyltransferase subunit 2 from Acinetobacter baylyi (strain ATCC 33305 / BD413 / ADP1).